The primary structure comprises 117 residues: Putative membrane protein insertion efficiency factor (117 aa).

It belongs to the UPF0161 family.

Its subcellular location is the cell inner membrane. Could be involved in insertion of integral membrane proteins into the membrane. This chain is Putative membrane protein insertion efficiency factor, found in Bartonella quintana (strain Toulouse) (Rochalimaea quintana).